Reading from the N-terminus, the 2084-residue chain is RNA-directed RNA polymerase L (2084 aa).

The interval 20-221 (EPGLYDQIYD…IELQKSEEEL (202 aa)) is endonuclease. Mn(2+)-binding residues include H80, D112, and E126. Residue K145 is the For endonuclease activity of the active site. The RdRp catalytic domain maps to 969–1172 (SARSLGPGSI…FGIYSSEKST (204 aa)). D1127 contacts Mg(2+). The tract at residues 1695–1810 (AQSGTLGGFS…TDGCPVRIME (116 aa)) is cap-binding.

The protein belongs to the Bunyavirales RNA polymerase family. As to quaternary structure, homomultimer. Interacts with the glycoprotein N; this interaction allows efficient polymerase packaging into virus particles. Interacts with nucleoprotein N. It depends on Mn(2+) as a cofactor. Requires Mg(2+) as cofactor.

It is found in the host Golgi apparatus. It localises to the host endoplasmic reticulum. The protein localises to the host endoplasmic reticulum-Golgi intermediate compartment. The protein resides in the virion. The catalysed reaction is RNA(n) + a ribonucleoside 5'-triphosphate = RNA(n+1) + diphosphate. Its activity is regulated as follows. Inhibited by Baloxavir acid (BXA). Its function is as follows. RNA-dependent RNA polymerase, which is responsible for the replication and transcription of the viral RNA genome using antigenomic RNA as an intermediate. During transcription, synthesizes subgenomic RNAs and assures their capping by a cap-snatching mechanism, which involves the endonuclease activity cleaving the host capped pre-mRNAs. These short capped RNAs are then used as primers for viral transcription. The 3'-end of subgenomic mRNAs molecules are not polyadenylated. During replication, the polymerase binds the 5' and 3' vRNA extremities at distinct sites. In turn, significant conformational changes occur in the polymerase and in vRNA to initiate active RNA synthesis. As a consequence of the use of the same enzyme for both transcription and replication, these mechanisms need to be well coordinated. This is RNA-directed RNA polymerase L from Dabie bandavirus (Severe fever with thrombocytopenia virus).